The sequence spans 152 residues: 3-hydroxyacyl-[acyl-carrier-protein] dehydratase FabZ (152 aa).

Residue His58 is part of the active site.

The protein belongs to the thioester dehydratase family. FabZ subfamily.

The protein localises to the cytoplasm. It carries out the reaction a (3R)-hydroxyacyl-[ACP] = a (2E)-enoyl-[ACP] + H2O. Functionally, involved in unsaturated fatty acids biosynthesis. Catalyzes the dehydration of short chain beta-hydroxyacyl-ACPs and long chain saturated and unsaturated beta-hydroxyacyl-ACPs. In Prochlorococcus marinus (strain MIT 9215), this protein is 3-hydroxyacyl-[acyl-carrier-protein] dehydratase FabZ.